A 145-amino-acid polypeptide reads, in one-letter code: uncharacterized protein (145 aa).

The N-terminal stretch at 1 to 20 (MPSKVCTLILLFSVINQMKC) is a signal peptide.

This is an uncharacterized protein from Caenorhabditis elegans.